The following is a 204-amino-acid chain: MSEHVPADEAPEPRLITETGLDRRIADIIEPVIVELGFELVRVRILNQNGMTLQIMAERKDGTMTVEDCEELSMAISPVLDVEDPVDKEYHLEVSSPGIDRPMVRASDFTRWQGNLLKCETSILIDNRKRFRGKIADVTPDGFILERDQVAYGEEPRLTIPFTALAEAKLILTDDLVRDALRADKQAKAAAEAANQNDETGEDQ.

This sequence belongs to the RimP family.

The protein localises to the cytoplasm. In terms of biological role, required for maturation of 30S ribosomal subunits. The chain is Ribosome maturation factor RimP from Allorhizobium ampelinum (strain ATCC BAA-846 / DSM 112012 / S4) (Agrobacterium vitis (strain S4)).